The chain runs to 141 residues: Large ribosomal subunit protein mL42 (141 aa).

The transit peptide at Met-1–His-31 directs the protein to the mitochondrion.

Belongs to the mitochondrion-specific ribosomal protein mL42 family. Component of the mitochondrial ribosome large subunit (39S) which comprises a 16S rRNA and about 50 distinct proteins. Component of the mitochondrial ribosome small subunit (28S) which comprises a 12S rRNA and about 30 distinct proteins.

Its subcellular location is the mitochondrion. This is Large ribosomal subunit protein mL42 (Mrpl42) from Rattus norvegicus (Rat).